The sequence spans 589 residues: Aspartate--tRNA ligase (589 aa).

Glu171 is a binding site for L-aspartate. The interval 195 to 198 is aspartate; the sequence is QLFK. Residue Arg217 coordinates L-aspartate. ATP contacts are provided by residues 217-219 and Gln226; that span reads RDE. His448 lines the L-aspartate pocket. Glu482 provides a ligand contact to ATP. Position 489 (Arg489) interacts with L-aspartate. 534-537 is a binding site for ATP; sequence GLDR.

The protein belongs to the class-II aminoacyl-tRNA synthetase family. Type 1 subfamily. In terms of assembly, homodimer.

It localises to the cytoplasm. It catalyses the reaction tRNA(Asp) + L-aspartate + ATP = L-aspartyl-tRNA(Asp) + AMP + diphosphate. Its function is as follows. Catalyzes the attachment of L-aspartate to tRNA(Asp) in a two-step reaction: L-aspartate is first activated by ATP to form Asp-AMP and then transferred to the acceptor end of tRNA(Asp). The sequence is that of Aspartate--tRNA ligase from Idiomarina loihiensis (strain ATCC BAA-735 / DSM 15497 / L2-TR).